Here is a 304-residue protein sequence, read N- to C-terminus: MSIPDSSVVKAFLLELQNNICNGLEALDGVASFKEDSWKREEGGGGQSRVLTGGKVFEQAGVNFSHVMGASMPASATAHRPELAGRNFEAMGVSLVIHPNNPHIPTTHANVRFFIAHKEGTDPIWWFGGGFDLTPYYPYLEDVVSWHQSAKALCEPFGDETYPKYKKWCDEYFWLPHRNETRGVGGLFFDDLNKQGFDKSFDFMQAVGNGFLTAYAPIVERRKETEYGEHERQFQLYRRGRYVEFNLVYDRGTLFGLQTGGRTESILMSMPPLVRWEYAYIPEAGSPEAALYSDYLKPRDWLSL.

A substrate-binding site is contributed by serine 94. Residues histidine 98 and histidine 108 each coordinate a divalent metal cation. Histidine 108 serves as the catalytic Proton donor. 110 to 112 (NVR) lines the substrate pocket. 2 residues coordinate a divalent metal cation: histidine 147 and histidine 177. The segment at 242 to 277 (YVEFNLVYDRGTLFGLQTGGRTESILMSMPPLVRWE) is important for dimerization. Substrate is bound at residue 260 to 262 (GGR).

It belongs to the aerobic coproporphyrinogen-III oxidase family. As to quaternary structure, homodimer. Requires a divalent metal cation as cofactor.

The protein localises to the cytoplasm. The catalysed reaction is coproporphyrinogen III + O2 + 2 H(+) = protoporphyrinogen IX + 2 CO2 + 2 H2O. It participates in porphyrin-containing compound metabolism; protoporphyrin-IX biosynthesis; protoporphyrinogen-IX from coproporphyrinogen-III (O2 route): step 1/1. In terms of biological role, involved in the heme biosynthesis. Catalyzes the aerobic oxidative decarboxylation of propionate groups of rings A and B of coproporphyrinogen-III to yield the vinyl groups in protoporphyrinogen-IX. This Shewanella piezotolerans (strain WP3 / JCM 13877) protein is Oxygen-dependent coproporphyrinogen-III oxidase.